The primary structure comprises 338 residues: 1-aminocyclopropane-1-carboxylate deaminase (338 aa).

Lys-51 is modified (N6-(pyridoxal phosphate)lysine). Catalysis depends on Ser-78, which acts as the Nucleophile.

Belongs to the ACC deaminase/D-cysteine desulfhydrase family. As to quaternary structure, homotrimer. Pyridoxal 5'-phosphate is required as a cofactor.

It carries out the reaction 1-aminocyclopropane-1-carboxylate + H2O = 2-oxobutanoate + NH4(+). Functionally, catalyzes a cyclopropane ring-opening reaction, the irreversible conversion of 1-aminocyclopropane-1-carboxylate (ACC) to ammonia and alpha-ketobutyrate. Allows growth on ACC as a nitrogen source. This chain is 1-aminocyclopropane-1-carboxylate deaminase, found in Burkholderia ambifaria (strain MC40-6).